The following is a 109-amino-acid chain: Class I hydrophobin 7 (109 aa).

Positions M1–A17 are cleaved as a signal peptide. Cystine bridges form between C28-C88, C35-C82, C36-C69, and C89-C102.

It belongs to the fungal hydrophobin family. Self-assembles to form functional amyloid fibrils called rodlets. Self-assembly into fibrillar rodlets occurs spontaneously at hydrophobic:hydrophilic interfaces and the rodlets further associate laterally to form amphipathic monolayers.

The protein localises to the secreted. The protein resides in the cell wall. Its function is as follows. Aerial growth, conidiation, and dispersal of filamentous fungi in the environment rely upon a capability of their secreting small amphipathic proteins called hydrophobins (HPBs) with low sequence identity. Class I can self-assemble into an outermost layer of rodlet bundles on aerial cell surfaces, conferring cellular hydrophobicity that supports fungal growth, development and dispersal; whereas Class II form highly ordered films at water-air interfaces through intermolecular interactions but contribute nothing to the rodlet structure. Hydph7 is a class I hydrophobin involved in fruiting body development. The sequence is that of Class I hydrophobin 7 from Pleurotus ostreatus (strain PC15) (Oyster mushroom).